Consider the following 667-residue polypeptide: Fermitin family homolog 3 (667 aa).

A Phosphoserine modification is found at serine 8. A Phosphotyrosine modification is found at tyrosine 11. Residues 229 to 558 form the FERM domain; sequence WLDSSRCLMQ…SLPDFGISYV (330 aa). Residues 354–457 form the PH domain; it reads DHLRIFRIPR…WMAGCRLASK (104 aa). Tyrosine 504 carries the post-translational modification Phosphotyrosine. Threonine 591 bears the Phosphothreonine mark.

The protein belongs to the kindlin family. As to quaternary structure, interacts with ITGB1, ITGB2 and ITGB3 (via cytoplasmic tails). As to expression, highly expressed in lymph node. Expressed in thymus, spleen and leukocytes. Weakly expressed in placenta, small intestine, stomach, testis and lung. Overexpressed in B-cell malignancies.

It is found in the cell projection. The protein localises to the podosome. Its function is as follows. Plays a central role in cell adhesion in hematopoietic cells. Acts by activating the integrin beta-1-3 (ITGB1, ITGB2 and ITGB3). Required for integrin-mediated platelet adhesion and leukocyte adhesion to endothelial cells. Required for activation of integrin beta-2 (ITGB2) in polymorphonuclear granulocytes (PMNs). In terms of biological role, isoform 2 may act as a repressor of NF-kappa-B and apoptosis. The chain is Fermitin family homolog 3 (FERMT3) from Homo sapiens (Human).